Here is a 206-residue protein sequence, read N- to C-terminus: FKBP-type 22 kDa peptidyl-prolyl cis-trans isomerase (206 aa).

The 87-residue stretch at 120 to 206 folds into the PPIase FKBP-type domain; the sequence is TDRVRVHYTG…VFEVELLEIL (87 aa).

As to quaternary structure, homodimer.

It localises to the cytoplasm. Its subcellular location is the periplasm. The catalysed reaction is [protein]-peptidylproline (omega=180) = [protein]-peptidylproline (omega=0). Its activity is regulated as follows. Strongly inhibited by FK506. Its function is as follows. PPIases accelerate the folding of proteins. Catalyzes the cis-trans isomerization of proline imidic peptide bonds in oligopeptides. Displays a preference for substrates with a lysyl residue in the P1 position. The chain is FKBP-type 22 kDa peptidyl-prolyl cis-trans isomerase (fklB) from Escherichia coli (strain K12).